Consider the following 376-residue polypeptide: Homeobox protein extradenticle (376 aa).

The interval Ala-16–Asn-35 is disordered. Residues Tyr-20–Glu-34 show a composition bias toward polar residues. A PBC domain is found at Arg-38 to Asp-237. A PBC-A region spans residues Glu-45–Gly-124. Residues Ala-127–Asp-237 form a PBC-B region. Residues Ala-238–Ile-300 constitute a DNA-binding region (homeobox; TALE-type). A compositionally biased stretch (low complexity) spans Ala-318–Met-335. The segment at Ala-318–Pro-376 is disordered.

Belongs to the TALE/PBX homeobox family. Interacts with Ubx and hth.

Its subcellular location is the nucleus. Transcription factor which acts with the selector homeodomain proteins altering the regulation of downstream target genes such as wingless (wg), teashirt (tsh) and decapentaplegic (dpp), thus affecting segmental identity. Delimits the eye field and prevent inappropriate eye development. Required for proper localization of chordotonal organs within the peripheral nervous system. This chain is Homeobox protein extradenticle, found in Drosophila pseudoobscura pseudoobscura (Fruit fly).